A 481-amino-acid chain; its full sequence is Ras-GEF domain-containing family member 1A (481 aa).

One can recognise an N-terminal Ras-GEF domain in the interval 41 to 170; the sequence is QDGHLISGSL…AIAQMTQSLL (130 aa). Positions 214-461 constitute a Ras-GEF domain; sequence DPLVLAQQLT…FVASFESEGP (248 aa).

Detected in brain and spinal cord. Highly expressed in a number of intrahepatic cholangiocarcinoma tissue biopsies.

Functionally, guanine nucleotide exchange factor (GEF) with specificity for RAP2A, KRAS, HRAS, and NRAS (in vitro). Plays a role in cell migration. In Homo sapiens (Human), this protein is Ras-GEF domain-containing family member 1A (RASGEF1A).